Reading from the N-terminus, the 129-residue chain is Protein yippee-like At5g53940 (129 aa).

Positions 12-109 (RSYRCRFCRT…LERGRIVDEI (98 aa)) constitute a Yippee domain. Positions 16, 19, 72, and 75 each coordinate Zn(2+).

This sequence belongs to the yippee family.

The protein is Protein yippee-like At5g53940 of Arabidopsis thaliana (Mouse-ear cress).